Here is a 96-residue protein sequence, read N- to C-terminus: uncharacterized protein (96 aa).

A signal peptide spans 1 to 28 (MNKKAIVGIFMSILMAGLVGCAGSSDAQ).

This is an uncharacterized protein from Butyrivibrio fibrisolvens.